The sequence spans 622 residues: Polypeptide N-acetylgalactosaminyltransferase 18 (622 aa).

The Cytoplasmic portion of the chain corresponds to 1–12 (MVCTRKTKTLVS). The helical; Signal-anchor for type II membrane protein transmembrane segment at 13–35 (TCVILSGMTNIICLLYVGWVTNY) threads the bilayer. Residues 36–622 (IASVYVRGQE…ITNVLRSLVS (587 aa)) lie on the Lumenal side of the membrane. 5 disulfide bridges follow: cysteine 144/cysteine 392, cysteine 383/cysteine 462, cysteine 497/cysteine 513, cysteine 545/cysteine 558, and cysteine 586/cysteine 606. Asparagine 146 carries N-linked (GlcNAc...) asparagine glycosylation. Residues 153-267 (LPEVSIVFIF…VGWAEPVLTR (115 aa)) are catalytic subdomain A. Residue aspartate 194 coordinates substrate. N-linked (GlcNAc...) asparagine glycosylation is present at asparagine 195. Mn(2+)-binding residues include aspartate 251 and histidine 253. N-linked (GlcNAc...) asparagine glycosylation is present at asparagine 320. The catalytic subdomain B stretch occupies residues 324 to 400 (PIRSPALIGC…PCSRIAHIER (77 aa)). Histidine 397 lines the Mn(2+) pocket. 2 residues coordinate substrate: arginine 400 and tyrosine 405. Residues 484-614 (AYGVLQNSLK…KCSGQHWTIT (131 aa)) form the Ricin B-type lectin domain.

The protein belongs to the glycosyltransferase 2 family. GalNAc-T subfamily. The cofactor is Mn(2+).

It is found in the golgi apparatus membrane. It carries out the reaction L-seryl-[protein] + UDP-N-acetyl-alpha-D-galactosamine = a 3-O-[N-acetyl-alpha-D-galactosaminyl]-L-seryl-[protein] + UDP + H(+). The enzyme catalyses L-threonyl-[protein] + UDP-N-acetyl-alpha-D-galactosamine = a 3-O-[N-acetyl-alpha-D-galactosaminyl]-L-threonyl-[protein] + UDP + H(+). It participates in protein modification; protein glycosylation. Its function is as follows. Catalyzes the initial reaction in O-linked oligosaccharide biosynthesis, the transfer of an N-acetyl-D-galactosamine (GalNAc) residue from UDP-GalNAc to a serine or threonine residue on the protein receptor. In Mus musculus (Mouse), this protein is Polypeptide N-acetylgalactosaminyltransferase 18 (Galnt18).